Here is a 477-residue protein sequence, read N- to C-terminus: MKKVEFFMLLLCFIAASSLVSADPPTCPADLGGKCSDSDDWQGDFFPEIPKIKYEGPSSKNPLAYRWYNAEEEILGKKMKDWFRFSVAFWHTFRGTGGDPFGAATKYWPWEDGTNSVSMAKRRMRANFEFLKKLGVDWWCFHDRDIAPDGTTLEESNKNLDEVIELAKELQKGSKIKPLWGTAQLFLHPRYMHGGATSSEVGVYAYAAAQVKKAMEVTHYLGGENYVFWGGREGYQTLLNTDMGRELDHLARFFEAAVAYKKKIGFKGTLLIEPKPQEPTKHQYDWDAATAANFLRKYGLIDEFKLNIECNHATLSGHTCHHELETARINGLLGNIDANTGDAQTGWDTDQFLTDVGEATMVMMSVIKNGGIAPGGFNFDAKLRRESTDVEDLFIAHISGMDTMARGLRNAVKILEEGSLSELVRKRYATWDSELGKQIEEGKADFEYLEKKAKEFGEPKVSSAKQELAEMIFQSAM.

Residue histidine 142 is part of the active site. 7 residues coordinate Mn(2+): glutamate 273, glutamate 309, histidine 312, aspartate 337, aspartate 348, aspartate 350, and aspartate 380.

This sequence belongs to the xylose isomerase family. It depends on Mn(2+) as a cofactor.

The enzyme catalyses alpha-D-xylose = alpha-D-xylulofuranose. This chain is Xylose isomerase (XYLA), found in Arabidopsis thaliana (Mouse-ear cress).